The following is an 891-amino-acid chain: Major core protein OPG136 precursor (891 aa).

Residues Ser-615–Gly-697 constitute a propeptide that is removed on maturation.

The protein belongs to the orthopxvirus protein OPG136 family. In terms of assembly, interacts with P39/A4. The precursor is cleaved by OPG083 to give rise to the 62 kDa mature protein during virion maturation. Proteolytic cleavage of major core proteins OPG136, OPG129, and OPG098, which occurs at a late stage of core formation, is required for production of infectious mature virions (MV).

The protein localises to the virion. Core protein 4a is the most abundant virion protein. Major component of the virion core that undergoes proteolytic processing during the immature virion (IV) to mature virion (MV) transition. In Cynomys gunnisoni (Gunnison's prairie dog), this protein is Major core protein OPG136 precursor (OPG136).